Here is a 164-residue protein sequence, read N- to C-terminus: uncharacterized protein (164 aa).

In terms of domain architecture, BFN spans 1–129 (MGEVRVVGIR…AVLAQAGLLI (129 aa)).

This is an uncharacterized protein from Mycobacterium tuberculosis (strain CDC 1551 / Oshkosh).